A 253-amino-acid polypeptide reads, in one-letter code: Amino-acid-binding protein AabA (253 aa).

The signal sequence occupies residues Met1–Cys23.

Belongs to the bacterial solute-binding protein 3 family.

It localises to the periplasm. This Dichelobacter nodosus (Bacteroides nodosus) protein is Amino-acid-binding protein AabA (aabA).